A 395-amino-acid polypeptide reads, in one-letter code: Formate-dependent phosphoribosylglycinamide formyltransferase (395 aa).

N(1)-(5-phospho-beta-D-ribosyl)glycinamide-binding positions include 22–23 (EL) and E82. ATP-binding positions include R115, K156, 161–166 (SSGKGQ), 196–199 (EGFI), and E204. The 190-residue stretch at 120–309 (RLAAETLGLP…EFALHARAIL (190 aa)) folds into the ATP-grasp domain. E268 and E280 together coordinate Mg(2+). Residues D287, K356, and 363–364 (RR) contribute to the N(1)-(5-phospho-beta-D-ribosyl)glycinamide site.

The protein belongs to the PurK/PurT family. In terms of assembly, homodimer.

The enzyme catalyses N(1)-(5-phospho-beta-D-ribosyl)glycinamide + formate + ATP = N(2)-formyl-N(1)-(5-phospho-beta-D-ribosyl)glycinamide + ADP + phosphate + H(+). The protein operates within purine metabolism; IMP biosynthesis via de novo pathway; N(2)-formyl-N(1)-(5-phospho-D-ribosyl)glycinamide from N(1)-(5-phospho-D-ribosyl)glycinamide (formate route): step 1/1. In terms of biological role, involved in the de novo purine biosynthesis. Catalyzes the transfer of formate to 5-phospho-ribosyl-glycinamide (GAR), producing 5-phospho-ribosyl-N-formylglycinamide (FGAR). Formate is provided by PurU via hydrolysis of 10-formyl-tetrahydrofolate. The protein is Formate-dependent phosphoribosylglycinamide formyltransferase of Stenotrophomonas maltophilia (strain K279a).